The chain runs to 240 residues: MRTLTIYHLGLIDYRTAWDVQRRIARARSAGQVGDTLLLLEHPPTITLGSRASTEHLLVPAEHLSAEGVTVVQSDRGGGATYHAPGQIVAYPIFKLLQHGRDIGRYLRGLEESVIRVLRDDGLIGERVPGLTGVWVRNGAAKICAIGIKVSAGGVTTHGLALNVNIDLRGFDLIVPCGVHGRGVTSMSAELGEVVAMSSVAERLIGHLCAVFDLEPAVVVTAGQWTAHLPAAERDHLAQR.

Positions 31 to 216 constitute a BPL/LPL catalytic domain; it reads GQVGDTLLLL…HLCAVFDLEP (186 aa). Substrate is bound by residues 76–83, 145–147, and 159–161; these read RGGGATYH, AIG, and GLA. Catalysis depends on C177, which acts as the Acyl-thioester intermediate.

It belongs to the LipB family.

It localises to the cytoplasm. The enzyme catalyses octanoyl-[ACP] + L-lysyl-[protein] = N(6)-octanoyl-L-lysyl-[protein] + holo-[ACP] + H(+). It functions in the pathway protein modification; protein lipoylation via endogenous pathway; protein N(6)-(lipoyl)lysine from octanoyl-[acyl-carrier-protein]: step 1/2. Its function is as follows. Catalyzes the transfer of endogenously produced octanoic acid from octanoyl-acyl-carrier-protein onto the lipoyl domains of lipoate-dependent enzymes. Lipoyl-ACP can also act as a substrate although octanoyl-ACP is likely to be the physiological substrate. This Roseiflexus sp. (strain RS-1) protein is Octanoyltransferase.